A 334-amino-acid chain; its full sequence is Spermidine synthase 1 (334 aa).

Positions 1–16 (MDAKETSATDLKRPRE) are enriched in basic and acidic residues. The interval 1-35 (MDAKETSATDLKRPREEDDNGGAATMETENGDQKK) is disordered. Residues 45–282 (PGWFSEMSPM…GVIGFMLCST (238 aa)) form the PABS domain. Gln76 is a binding site for S-adenosyl 3-(methylsulfanyl)propylamine. Tyr106 provides a ligand contact to putrescine. S-adenosyl 3-(methylsulfanyl)propylamine contacts are provided by residues Gln107, Asp131, Glu151, 182 to 183 (DG), and Asp201. Asp201 functions as the Proton acceptor in the catalytic mechanism. Putrescine is bound by residues 201 to 204 (DSSD) and Tyr270.

It belongs to the spermidine/spermine synthase family. In terms of assembly, homotetramer and heterodimer. Component of a multiprotein complex. Interacts with SPMS and SPDSYN2.

The enzyme catalyses S-adenosyl 3-(methylsulfanyl)propylamine + putrescine = S-methyl-5'-thioadenosine + spermidine + H(+). Its pathway is amine and polyamine biosynthesis; spermidine biosynthesis; spermidine from putrescine: step 1/1. This Arabidopsis thaliana (Mouse-ear cress) protein is Spermidine synthase 1 (SPDSYN1).